Reading from the N-terminus, the 296-residue chain is Formamidopyrimidine-DNA glycosylase (296 aa).

Pro-2 functions as the Schiff-base intermediate with DNA in the catalytic mechanism. Glu-3 (proton donor) is an active-site residue. Catalysis depends on Lys-58, which acts as the Proton donor; for beta-elimination activity. Residues His-104, Arg-126, and Lys-169 each coordinate DNA. Residues 260 to 296 (SVYDREGQACGTPGCGGTVARIVQAGRSTFYCAACQK) form an FPG-type zinc finger. The Proton donor; for delta-elimination activity role is filled by Arg-286.

The protein belongs to the FPG family. As to quaternary structure, monomer. Requires Zn(2+) as cofactor.

The catalysed reaction is Hydrolysis of DNA containing ring-opened 7-methylguanine residues, releasing 2,6-diamino-4-hydroxy-5-(N-methyl)formamidopyrimidine.. It carries out the reaction 2'-deoxyribonucleotide-(2'-deoxyribose 5'-phosphate)-2'-deoxyribonucleotide-DNA = a 3'-end 2'-deoxyribonucleotide-(2,3-dehydro-2,3-deoxyribose 5'-phosphate)-DNA + a 5'-end 5'-phospho-2'-deoxyribonucleoside-DNA + H(+). Its function is as follows. Involved in base excision repair of DNA damaged by oxidation or by mutagenic agents. Acts as a DNA glycosylase that recognizes and removes damaged bases. Has a preference for oxidized purines, such as 7,8-dihydro-8-oxoguanine (8-oxoG). Has AP (apurinic/apyrimidinic) lyase activity and introduces nicks in the DNA strand. Cleaves the DNA backbone by beta-delta elimination to generate a single-strand break at the site of the removed base with both 3'- and 5'-phosphates. The protein is Formamidopyrimidine-DNA glycosylase of Rhizobium etli (strain CIAT 652).